We begin with the raw amino-acid sequence, 399 residues long: Enoyl-[acyl-carrier-protein] reductase [NADH] 2 (399 aa).

Residues 48–53 (GASSGF), 75–76 (FE), 112–113 (DA), and 141–142 (LA) each bind NAD(+). Substrate is bound at residue Tyr-227. Catalysis depends on Tyr-237, which acts as the Proton donor. NAD(+)-binding positions include Lys-246 and 275–277 (LVT).

Belongs to the TER reductase family. Monomer.

It catalyses the reaction a 2,3-saturated acyl-[ACP] + NAD(+) = a (2E)-enoyl-[ACP] + NADH + H(+). The protein operates within lipid metabolism; fatty acid biosynthesis. Its function is as follows. Involved in the final reduction of the elongation cycle of fatty acid synthesis (FAS II). Catalyzes the reduction of a carbon-carbon double bond in an enoyl moiety that is covalently linked to an acyl carrier protein (ACP). The chain is Enoyl-[acyl-carrier-protein] reductase [NADH] 2 from Vibrio parahaemolyticus serotype O3:K6 (strain RIMD 2210633).